We begin with the raw amino-acid sequence, 211 residues long: Thiamine-phosphate synthase (211 aa).

4-amino-2-methyl-5-(diphosphooxymethyl)pyrimidine is bound by residues 37–41 (QLRIK) and N69. Mg(2+) contacts are provided by D70 and D89. Residue S108 participates in 4-amino-2-methyl-5-(diphosphooxymethyl)pyrimidine binding. A 2-[(2R,5Z)-2-carboxy-4-methylthiazol-5(2H)-ylidene]ethyl phosphate-binding site is contributed by 134 to 136 (TQT). K137 provides a ligand contact to 4-amino-2-methyl-5-(diphosphooxymethyl)pyrimidine. 2-[(2R,5Z)-2-carboxy-4-methylthiazol-5(2H)-ylidene]ethyl phosphate-binding positions include G166 and 186 to 187 (IS).

It belongs to the thiamine-phosphate synthase family. Mg(2+) serves as cofactor.

It carries out the reaction 2-[(2R,5Z)-2-carboxy-4-methylthiazol-5(2H)-ylidene]ethyl phosphate + 4-amino-2-methyl-5-(diphosphooxymethyl)pyrimidine + 2 H(+) = thiamine phosphate + CO2 + diphosphate. It catalyses the reaction 2-(2-carboxy-4-methylthiazol-5-yl)ethyl phosphate + 4-amino-2-methyl-5-(diphosphooxymethyl)pyrimidine + 2 H(+) = thiamine phosphate + CO2 + diphosphate. The enzyme catalyses 4-methyl-5-(2-phosphooxyethyl)-thiazole + 4-amino-2-methyl-5-(diphosphooxymethyl)pyrimidine + H(+) = thiamine phosphate + diphosphate. The protein operates within cofactor biosynthesis; thiamine diphosphate biosynthesis; thiamine phosphate from 4-amino-2-methyl-5-diphosphomethylpyrimidine and 4-methyl-5-(2-phosphoethyl)-thiazole: step 1/1. Condenses 4-methyl-5-(beta-hydroxyethyl)thiazole monophosphate (THZ-P) and 2-methyl-4-amino-5-hydroxymethyl pyrimidine pyrophosphate (HMP-PP) to form thiamine monophosphate (TMP). This Shigella boydii serotype 4 (strain Sb227) protein is Thiamine-phosphate synthase.